A 229-amino-acid chain; its full sequence is Clathrin light chain B (229 aa).

2 stretches are compositionally biased toward low complexity: residues 1–17 (MAEDFGFFSSSESGAPE) and 45–58 (GAPAASQVASAQPG). The segment at 1–80 (MAEDFGFFSS…TVNGDVFQEA (80 aa)) is disordered. Phosphoserine occurs at positions 11 and 13. Positions 93-155 (ADRLTQEPES…QVEKNKINNR (63 aa)) are involved in binding clathrin heavy chain. At Thr-187 the chain carries Phosphothreonine. Residues Cys-199 and Cys-209 are joined by a disulfide bond. Lys-204 bears the N6-acetyllysine mark. Ser-217 carries the phosphoserine modification.

This sequence belongs to the clathrin light chain family. As to quaternary structure, clathrin coats are formed from molecules containing 3 heavy chains and 3 light chains. Interacts (via N-terminus) with HIP1. Interacts with HIP1R.

It is found in the cytoplasmic vesicle membrane. The protein localises to the membrane. It localises to the coated pit. In terms of biological role, clathrin is the major protein of the polyhedral coat of coated pits and vesicles. The polypeptide is Clathrin light chain B (Cltb) (Rattus norvegicus (Rat)).